We begin with the raw amino-acid sequence, 570 residues long: Glycine--tRNA ligase (570 aa).

Positions 99 and 165 each coordinate substrate. Residues 197–199 (RNE), 207–212 (LRLREF), 324–325 (EC), and 443–446 (GIDR) contribute to the ATP site. Substrate is bound at residue 212 to 216 (FTQAE). 439 to 443 (EPSFG) contributes to the substrate binding site.

Belongs to the class-II aminoacyl-tRNA synthetase family.

Its subcellular location is the cytoplasm. The catalysed reaction is tRNA(Gly) + glycine + ATP = glycyl-tRNA(Gly) + AMP + diphosphate. In terms of biological role, catalyzes the attachment of glycine to tRNA(Gly). The protein is Glycine--tRNA ligase of Thermococcus gammatolerans (strain DSM 15229 / JCM 11827 / EJ3).